Consider the following 260-residue polypeptide: Membrane protein insertase YidC 1 (260 aa).

The N-terminal stretch at 1 to 22 is a signal peptide; sequence MLKSYRAVLVSLSLLFVFVLSG. Cys23 is lipidated: N-palmitoyl cysteine. Cys23 is lipidated: S-diacylglycerol cysteine. 5 helical membrane passes run 29–49, 52–72, 133–153, 164–184, and 213–233; these read IDAH…SFMI, VAHH…TLVI, LAGC…YYAI, FLWV…IAAL, and MPAM…LYWI.

The protein belongs to the OXA1/ALB3/YidC family. Type 2 subfamily.

It is found in the cell membrane. Required for the insertion and/or proper folding and/or complex formation of integral membrane proteins into the membrane. Involved in integration of membrane proteins that insert both dependently and independently of the Sec translocase complex, as well as at least some lipoproteins. The chain is Membrane protein insertase YidC 1 from Bacillus cereus (strain ATCC 14579 / DSM 31 / CCUG 7414 / JCM 2152 / NBRC 15305 / NCIMB 9373 / NCTC 2599 / NRRL B-3711).